The chain runs to 383 residues: Arginine biosynthesis bifunctional protein ArgJ (383 aa).

Thr-146, Lys-168, Thr-179, Glu-259, Asn-378, and Thr-383 together coordinate substrate. Thr-179 acts as the Nucleophile in catalysis.

It belongs to the ArgJ family. Heterotetramer of two alpha and two beta chains.

Its subcellular location is the cytoplasm. The enzyme catalyses N(2)-acetyl-L-ornithine + L-glutamate = N-acetyl-L-glutamate + L-ornithine. The catalysed reaction is L-glutamate + acetyl-CoA = N-acetyl-L-glutamate + CoA + H(+). It functions in the pathway amino-acid biosynthesis; L-arginine biosynthesis; L-ornithine and N-acetyl-L-glutamate from L-glutamate and N(2)-acetyl-L-ornithine (cyclic): step 1/1. It participates in amino-acid biosynthesis; L-arginine biosynthesis; N(2)-acetyl-L-ornithine from L-glutamate: step 1/4. In terms of biological role, catalyzes two activities which are involved in the cyclic version of arginine biosynthesis: the synthesis of N-acetylglutamate from glutamate and acetyl-CoA as the acetyl donor, and of ornithine by transacetylation between N(2)-acetylornithine and glutamate. This chain is Arginine biosynthesis bifunctional protein ArgJ, found in Thermobifida fusca (strain YX).